Reading from the N-terminus, the 116-residue chain is UPF0329 protein ECU05_1650 (116 aa).

The protein belongs to the UPF0329 family.

This is UPF0329 protein ECU05_1650 from Encephalitozoon cuniculi (strain GB-M1) (Microsporidian parasite).